The following is a 338-amino-acid chain: Anthranilate phosphoribosyltransferase (338 aa).

Residues G81, 84 to 85 (GD), T89, 91 to 94 (NVST), 109 to 117 (KHGNRALSS), and A121 contribute to the 5-phospho-alpha-D-ribose 1-diphosphate site. G81 serves as a coordination point for anthranilate. S93 contributes to the Mg(2+) binding site. N112 provides a ligand contact to anthranilate. R167 is an anthranilate binding site. Positions 225 and 226 each coordinate Mg(2+).

The protein belongs to the anthranilate phosphoribosyltransferase family. Homodimer. Mg(2+) is required as a cofactor.

The enzyme catalyses N-(5-phospho-beta-D-ribosyl)anthranilate + diphosphate = 5-phospho-alpha-D-ribose 1-diphosphate + anthranilate. The protein operates within amino-acid biosynthesis; L-tryptophan biosynthesis; L-tryptophan from chorismate: step 2/5. In terms of biological role, catalyzes the transfer of the phosphoribosyl group of 5-phosphorylribose-1-pyrophosphate (PRPP) to anthranilate to yield N-(5'-phosphoribosyl)-anthranilate (PRA). The chain is Anthranilate phosphoribosyltransferase from Chelativorans sp. (strain BNC1).